The sequence spans 300 residues: GTPase Era (300 aa).

Positions 4-172 (KSGFVALAGK…LEKIKEELPE (169 aa)) constitute an Era-type G domain. The segment at 12 to 19 (GKPNVGKS) is G1. GTP is bound at residue 12-19 (GKPNVGKS). The tract at residues 38-42 (QTTRN) is G2. A G3 region spans residues 59-62 (DTPG). Residues 59 to 63 (DTPGI) and 121 to 124 (NKID) each bind GTP. The G4 stretch occupies residues 121-124 (NKID). Residues 151–153 (ISA) are G5. A KH type-2 domain is found at 195–280 (IREKIFHLTR…YLDLNVKVKE (86 aa)).

This sequence belongs to the TRAFAC class TrmE-Era-EngA-EngB-Septin-like GTPase superfamily. Era GTPase family. Monomer.

It is found in the cytoplasm. It localises to the cell inner membrane. In terms of biological role, an essential GTPase that binds both GDP and GTP, with rapid nucleotide exchange. Plays a role in 16S rRNA processing and 30S ribosomal subunit biogenesis and possibly also in cell cycle regulation and energy metabolism. In Thermotoga maritima (strain ATCC 43589 / DSM 3109 / JCM 10099 / NBRC 100826 / MSB8), this protein is GTPase Era.